A 192-amino-acid polypeptide reads, in one-letter code: Xanthine phosphoribosyltransferase (192 aa).

Xanthine contacts are provided by Leu20 and Asn27. 128 to 132 lines the 5-phospho-alpha-D-ribose 1-diphosphate pocket; sequence ANGDA. Position 156 (Lys156) interacts with xanthine.

Belongs to the purine/pyrimidine phosphoribosyltransferase family. Xpt subfamily. In terms of assembly, homodimer.

It is found in the cytoplasm. It carries out the reaction XMP + diphosphate = xanthine + 5-phospho-alpha-D-ribose 1-diphosphate. The protein operates within purine metabolism; XMP biosynthesis via salvage pathway; XMP from xanthine: step 1/1. In terms of biological role, converts the preformed base xanthine, a product of nucleic acid breakdown, to xanthosine 5'-monophosphate (XMP), so it can be reused for RNA or DNA synthesis. The protein is Xanthine phosphoribosyltransferase of Staphylococcus carnosus (strain TM300).